The chain runs to 398 residues: 1-deoxy-D-xylulose 5-phosphate reductoisomerase (398 aa).

Residues Thr10, Gly11, Ser12, Ile13, Gly36, Lys37, Asn38, and Asn124 each contribute to the NADPH site. Lys125 serves as a coordination point for 1-deoxy-D-xylulose 5-phosphate. Glu126 is a binding site for NADPH. Asp150 is a Mn(2+) binding site. 4 residues coordinate 1-deoxy-D-xylulose 5-phosphate: Ser151, Glu152, Ser186, and His209. Residue Glu152 participates in Mn(2+) binding. Gly215 provides a ligand contact to NADPH. The 1-deoxy-D-xylulose 5-phosphate site is built by Ser222, Asn227, Lys228, and Glu231. Glu231 lines the Mn(2+) pocket.

It belongs to the DXR family. As to quaternary structure, homodimer. Requires Mg(2+) as cofactor. The cofactor is Mn(2+).

It carries out the reaction 2-C-methyl-D-erythritol 4-phosphate + NADP(+) = 1-deoxy-D-xylulose 5-phosphate + NADPH + H(+). It participates in isoprenoid biosynthesis; isopentenyl diphosphate biosynthesis via DXP pathway; isopentenyl diphosphate from 1-deoxy-D-xylulose 5-phosphate: step 1/6. Catalyzes the NADPH-dependent rearrangement and reduction of 1-deoxy-D-xylulose-5-phosphate (DXP) to 2-C-methyl-D-erythritol 4-phosphate (MEP). This chain is 1-deoxy-D-xylulose 5-phosphate reductoisomerase, found in Shigella flexneri.